The following is a 252-amino-acid chain: Sulfoacetaldehyde reductase 2 (252 aa).

6–30 serves as a coordination point for NADP(+); that stretch reads LITGATSGFGRAAARRFADAGWSLI. Residue Ser-139 participates in substrate binding. The Proton acceptor role is filled by Tyr-152.

This sequence belongs to the short-chain dehydrogenases/reductases (SDR) family. As to quaternary structure, homodimer and heterotetramer.

It catalyses the reaction 2-hydroxyethane-1-sulfonate + NADP(+) = sulfoacetaldehyde + NADPH + H(+). It participates in organosulfur degradation. Its function is as follows. Catalyzes the formation of isethionate from 2-sulfoacetaldehyde in the deaminative pathway of taurine. Constitutively expressed enzyme that only mediates a small part of the activity observed in taurine-grown cells. This Chromohalobacter salexigens (strain ATCC BAA-138 / DSM 3043 / CIP 106854 / NCIMB 13768 / 1H11) protein is Sulfoacetaldehyde reductase 2 (isfD2).